Consider the following 5147-residue polypeptide: Cadherin-related tumor suppressor (5147 aa).

A signal peptide spans 1-35 (MERLLLLFFLLLAGRESLCQTGDTKLELLAPRGRS). 34 Cadherin domains span residues 36–156 (YATT…SPEF), 157–270 (PEPS…PPIF), 271–382 (DHSD…DPII), 383–494 (SFRF…EPVF), 495–599 (EKSE…APQF), 600–708 (SQRE…DPQF), 709–820 (YPRH…LEML), 821–942 (ECGQ…APVF), 943–1049 (ALDR…TPVF), 1050–1153 (DHTS…APQF), 1154–1278 (TNST…APEF), 1279–1384 (LRAP…APEF), 1385–1489 (TQSS…PPIF), 1490–1601 (PSTA…APVF), 1602–1713 (VSMN…VPQF), 1714–1823 (EQRS…PPQF), 1824–1922 (LDTP…PPLF), 1923–2027 (EDTV…APIF), 2028–2167 (DPMS…VPVF), 2168–2278 (ISAN…SPVF), 2279–2385 (DPKQ…PTFL), 2386–2491 (DSPY…DPVF), 2492–2596 (ELQS…IPKF), 2597–2703 (DSTT…FPTF), 2704–2810 (AYMA…APVM), 2811–2913 (EQLI…PPKF), 2914–3013 (TRLF…APEF), 3014–3124 (EHSF…PPKF), 3125–3229 (EQAE…TPRF), 3230–3334 (SVNS…PPVF), 3335–3439 (NHKE…YPQF), 3440–3545 (LQPV…PPEF), 3546–3651 (IKHY…GPTF), and 3652–3756 (TPEG…NPST). Over 36–4583 (YATTYEQYAA…GQDAAQVADP (4548 aa)) the chain is Extracellular. Residues Asn-239, Asn-257, Asn-276, Asn-280, Asn-402, and Asn-461 are each glycosylated (N-linked (GlcNAc...) asparagine). 2 N-linked (GlcNAc...) asparagine glycosylation sites follow: Asn-605 and Asn-631. Residues Asn-1155, Asn-1367, and Asn-1458 are each glycosylated (N-linked (GlcNAc...) asparagine). N-linked (GlcNAc...) asparagine glycans are attached at residues Asn-1751, Asn-1831, and Asn-1880. N-linked (GlcNAc...) asparagine glycosylation is found at Asn-2080, Asn-2171, Asn-2247, Asn-2290, Asn-2437, and Asn-2581. An N-linked (GlcNAc...) asparagine glycan is attached at Asn-2799. N-linked (GlcNAc...) asparagine glycosylation is found at Asn-2920, Asn-2946, and Asn-2967. Asn-3167, Asn-3303, Asn-3386, Asn-3389, and Asn-3525 each carry an N-linked (GlcNAc...) asparagine glycan. Asn-3852, Asn-3865, and Asn-3905 each carry an N-linked (GlcNAc...) asparagine glycan. 4 EGF-like domains span residues 3950-4011 (GYEP…EQCS), 4013-4049 (RQDPCLPNPCHSQVQCRRLGSDFQCMCPANRDGKHCE), 4052-4090 (RSDVCYSKPCRNGGSCQRSPDGSSYFCLCRPGFRGNQCE), and 4092-4128 (VSDSCRPNPCLHGGLCVSLKPGYKCNCTPGRYGRHCE). 16 disulfide bridges follow: Cys-3954-Cys-3966, Cys-3960-Cys-3999, Cys-4001-Cys-4010, Cys-4017-Cys-4028, Cys-4022-Cys-4037, Cys-4039-Cys-4048, Cys-4056-Cys-4067, Cys-4061-Cys-4078, Cys-4080-Cys-4089, Cys-4096-Cys-4107, Cys-4101-Cys-4116, Cys-4118-Cys-4127, Cys-4294-Cys-4320, Cys-4325-Cys-4341, Cys-4334-Cys-4350, and Cys-4352-Cys-4361. Residues 4129-4320 (RFSYGFQPLS…LQQKGILAGC (192 aa)) form the Laminin G-like 1 domain. A glycan (N-linked (GlcNAc...) asparagine) is linked at Asn-4306. Positions 4321-4362 (NRQACQPALAAERCGGFAGQCIDRWSSSLCQCGGHLQSPDCS) constitute an EGF-like 5 domain. The region spanning 4402-4569 (DNQQMRERRA…RYHGKIESGC (168 aa)) is the Laminin G-like 2 domain. N-linked (GlcNAc...) asparagine glycosylation is found at Asn-4414, Asn-4471, Asn-4487, Asn-4539, and Asn-4550. Residues Cys-4536 and Cys-4569 are joined by a disulfide bond. Residues 4584-4609 (LSIGFTLVIVFFVILVVAILGSYVIY) form a helical membrane-spanning segment. Over 4610-5147 (RFRGKQEKIG…NGPAAPEEYV (538 aa)) the chain is Cytoplasmic. The interval 4744–4771 (PEHYDLENASSIAPSDIDIVYHYKGYRE) is essential for stability of mitochondrial electron chain complexes I and V, and promotes interaction with ND-24. 3 disordered regions span residues 4787–4850 (AYTH…SQQP), 4871–4921 (TSSS…QTSM), and 4967–5041 (GDVD…PIPP). Over residues 4826–4835 (SASRTHQSTP) the composition is skewed to polar residues. 2 stretches are compositionally biased toward low complexity: residues 4838-4850 (RLSPSSELSSQQP) and 4891-4918 (SPVMSQLSGQSSSASRQKPGVPQQQAQQ). A Phosphoserine modification is found at Ser-4843. A compositionally biased stretch (polar residues) spans 4972–5008 (HSSTSTDESGNDSFTCSEIEYDNNSLSGDGKYSTSKS). Ser-5054 and Ser-5061 each carry phosphoserine. The interval 5113 to 5147 (PDTNGPSQQQQQQTQVVSTLRMPSSNGPAAPEEYV) is disordered. The span at 5119-5131 (SQQQQQQTQVVST) shows a compositional bias: low complexity.

As to quaternary structure, interacts with Fbxl7. Ft-mito interacts with NADH dehydrogenase subunit ND-24 and with ATP synthase subunit ATPsynC. Phosphorylated by fj on Ser/Thr of cadherin domains. Phosphorylation by fj enhances binding to ds. Phosphorylated in the cytoplasmic domain in a dco-dependent manner which is promoted by ds. In terms of processing, proteolytically cleaved to yield stably associated N- and C-terminal fragments. The C-terminal fragment is processed further to release a 68 kDa mitochondrial fragment, Ft-mito.

It localises to the cell membrane. Its subcellular location is the apical cell membrane. The protein localises to the mitochondrion. Its function is as follows. Involved in regulation of planar cell polarity in the compound eye where it is required for correct specification of the R3 and R4 photoreceptor cells by regulating Fz activity in the R3/R4 precursor cells. This is likely to occur through creation of an ft gradient so that the equatorial R3/R4 precursor cell has a higher level of ft function than its polar neighbor. Also required for planar cell polarity of wing hairs. Mediates heterophilic cell adhesion in vitro and is required to stabilize ds on the cell surface. Involved in regulation of eye imaginal disk size. Upstream component of the Hippo pathway where it is likely to act as a cell surface receptor involved in regulation of tissue size and is required for the localization and stability of ex. Probably acts as a cell surface receptor for ds. Regulates mitochondrial electron transport chain integrity and promotes oxidative phosphorylation. This Drosophila melanogaster (Fruit fly) protein is Cadherin-related tumor suppressor.